A 39-amino-acid polypeptide reads, in one-letter code: B melanoma antigen 4 (39 aa).

An N-terminal signal peptide occupies residues 1–17; sequence MAAGAVFLALSAQLLQA.

The protein belongs to the BAGE family. In terms of tissue distribution, not expressed in normal tissues except in testis. Expressed in melanoma, bladder and lung carcinomas.

It localises to the secreted. Functionally, unknown. Candidate gene encoding tumor antigens. In Homo sapiens (Human), this protein is B melanoma antigen 4 (BAGE4).